Reading from the N-terminus, the 473-residue chain is Glutamate--tRNA ligase 1 (473 aa).

The 'HIGH' region motif lies at 10-20; that stretch reads PSPTGFLHIGG. A 'KMSKS' region motif is present at residues 252–256; the sequence is KLSKR. Lys-255 lines the ATP pocket.

Belongs to the class-I aminoacyl-tRNA synthetase family. Glutamate--tRNA ligase type 1 subfamily. As to quaternary structure, monomer.

The protein resides in the cytoplasm. It carries out the reaction tRNA(Glu) + L-glutamate + ATP = L-glutamyl-tRNA(Glu) + AMP + diphosphate. Catalyzes the attachment of glutamate to tRNA(Glu) in a two-step reaction: glutamate is first activated by ATP to form Glu-AMP and then transferred to the acceptor end of tRNA(Glu). This Wolbachia pipientis wMel protein is Glutamate--tRNA ligase 1.